The chain runs to 44 residues: SGVGDGVDVVSAIEGAAGPIAAIGGAVLTVMVGIKVYKWVRRAM.

Ser1 bears the N-acetylserine; by host mark. The Periplasmic portion of the chain corresponds to 1 to 19; it reads SGVGDGVDVVSAIEGAAGP. A helical transmembrane segment spans residues 20-37; sequence IAAIGGAVLTVMVGIKVY. The Cytoplasmic segment spans residues 38–44; the sequence is KWVRRAM.

The protein belongs to the inovirus capsid protein family. As to quaternary structure, homomultimerizes. There are several thousands of this protein in the phage capsid.

It localises to the virion. It is found in the host membrane. Functionally, self assembles to form a helical capsid wrapping up the viral genomic DNA. The capsid displays a filamentous structure with a length of 760-1950 nm and a width of 6-8 nm. The virion assembly and budding take place at the host inner membrane. This Xanthomonas campestris pv. oryzae (Bacteriophage Xf) protein is Capsid protein G8P (VIII).